A 65-amino-acid chain; its full sequence is Small ribosomal subunit protein bS21 (65 aa).

This sequence belongs to the bacterial ribosomal protein bS21 family.

In Chlorobaculum parvum (strain DSM 263 / NCIMB 8327) (Chlorobium vibrioforme subsp. thiosulfatophilum), this protein is Small ribosomal subunit protein bS21.